Reading from the N-terminus, the 265-residue chain is Small ribosomal subunit protein uS5 (265 aa).

Over residues Met1 to Ala15 the composition is skewed to low complexity. The tract at residues Met1–Glu44 is disordered. Residues Arg26–Gly35 show a composition bias toward basic residues. An S5 DRBM domain is found at Leu88–Val151. The disordered stretch occupies residues Thr245–Ala265. Positions Glu246–Leu258 are enriched in basic and acidic residues.

The protein belongs to the universal ribosomal protein uS5 family.

Component of the ribosome, a large ribonucleoprotein complex responsible for the synthesis of proteins in the cell. The small ribosomal subunit (SSU) binds messenger RNAs (mRNAs) and translates the encoded message by selecting cognate aminoacyl-transfer RNA (tRNA) molecules. The large subunit (LSU) contains the ribosomal catalytic site termed the peptidyl transferase center (PTC), which catalyzes the formation of peptide bonds, thereby polymerizing the amino acids delivered by tRNAs into a polypeptide chain. The nascent polypeptides leave the ribosome through a tunnel in the LSU and interact with protein factors that function in enzymatic processing, targeting, and the membrane insertion of nascent chains at the exit of the ribosomal tunnel. Plays a role in the assembly and function of the 40S ribosomal subunit. Mutations in this protein affects the control of translational fidelity. Involved in nucleolar processing of pre-18S ribosomal RNA and ribosome assembly. This Leishmania amazonensis protein is Small ribosomal subunit protein uS5.